Consider the following 118-residue polypeptide: Eukaryotic translation initiation factor 4E-binding protein 1 (118 aa).

The residue at position 2 (Ser-2) is an N-acetylserine. Residues 27–48 form a disordered region; the sequence is VQLPPGDYSTTPGGTLFSTTPG. The segment covering 34–48 has biased composition (polar residues); it reads YSTTPGGTLFSTTPG. Thr-37 carries the phosphothreonine; by MTOR modification. Thr-41 bears the Phosphothreonine mark. Ser-44 bears the Phosphoserine mark. The residue at position 46 (Thr-46) is a Phosphothreonine; by MTOR. The residue at position 50 (Thr-50) is a Phosphothreonine. Tyr-54 is modified (phosphotyrosine). Positions 54 to 60 match the YXXXXLphi motif motif; sequence YDRKFLM. Lys-57 is covalently cross-linked (Glycyl lysine isopeptide (Lys-Gly) (interchain with G-Cter in ubiquitin)). A disordered region spans residues 64–118; the sequence is NSPVTKTPPRDLPTIPGVTSPTGDEPPTEARQNHLRSSPEDKPAGGEESQFEMDI. Ser-65 bears the Phosphoserine; by DYRK2, MAPK1, MAPK3 and MTOR mark. At Thr-70 the chain carries Phosphothreonine; by MTOR. Residue Thr-77 is modified to Phosphothreonine. Residues Ser-83 and Ser-100 each carry the phosphoserine modification. Position 101 is a phosphoserine; by DYRK2 (Ser-101). Residue Ser-112 is modified to Phosphoserine. The TOS motif motif lies at 114 to 118; the sequence is FEMDI.

The protein belongs to the eIF4E-binding protein family. In terms of assembly, hypophosphorylated EIF4EBP1 competes with EIF4G1/EIF4G3 to interact with EIF4E; insulin stimulated MAP-kinase (MAPK1 and MAPK3) or mTORC1 phosphorylation of EIF4EBP1 causes dissociation of the complex allowing EIF4G1/EIF4G3 to bind and consequent initiation of translation. Interacts (via TOS motif) with RPTOR; promoting phosphorylation by mTORC1. Phosphorylated on serine and threonine residues in response to insulin, EGF and PDGF. Phosphorylation at Thr-37, Thr-46, Ser-65 and Thr-70, corresponding to the hyperphosphorylated form, is regulated by mTORC1 and abolishes binding to EIF4E. Post-translationally, ubiquitinated: when eIF4E levels are low, hypophosphorylated form is ubiquitinated by the BCR(KLHL25) complex, leading to its degradation and serving as a homeostatic mechanism to maintain translation and prevent eIF4E inhibition when eIF4E levels are low. Not ubiquitinated when hyperphosphorylated (at Thr-37, Thr-46, Ser-65 and Thr-70) or associated with eIF4E.

It localises to the cytoplasm. Its subcellular location is the nucleus. Its function is as follows. Repressor of translation initiation that regulates EIF4E activity by preventing its assembly into the eIF4F complex: hypophosphorylated form competes with EIF4G1/EIF4G3 and strongly binds to EIF4E, leading to repress translation. In contrast, hyperphosphorylated form dissociates from EIF4E, allowing interaction between EIF4G1/EIF4G3 and EIF4E, leading to initiation of translation. Mediates the regulation of protein translation by hormones, growth factors and other stimuli that signal through the MAP kinase and mTORC1 pathways. This chain is Eukaryotic translation initiation factor 4E-binding protein 1 (EIF4EBP1), found in Bos taurus (Bovine).